Consider the following 221-residue polypeptide: MFSDFLSLMFTAALMTLGLAVCSLLLGLFLSLIFAVLEANRFVGKPMTVFVALLRGLPEIIVVLLVYFGSTELVEMLTGEYIEFGAFGCGVLALSLIFAAYASQTLRGAIQAIPKGQWESGAALGLSKSYTFIHIVMPQVWRHALPGLSTQWLVLLKDTALVSLIGVDDLMHQADLINTNTHQPFTWYGIAALIYLAVTLISQVGIRKLELRFTRFERGVK.

Residues 13–206 (ALMTLGLAVC…AVTLISQVGI (194 aa)) enclose the ABC transmembrane type-1 domain. A run of 5 helical transmembrane segments spans residues 17–37 (LGLA…FAVL), 49–69 (VFVA…VYFG), 82–102 (IEFG…AAYA), 121–141 (GAAL…PQVW), and 186–206 (TWYG…QVGI).

This sequence belongs to the binding-protein-dependent transport system permease family. HisMQ subfamily. As to quaternary structure, the complex is composed of two ATP-binding proteins (ArtP), two transmembrane proteins (ArtM and ArtQ) and a solute-binding protein (ArtI).

The protein resides in the cell inner membrane. Its function is as follows. Part of the ABC transporter complex ArtPIQM involved in arginine transport. Probably responsible for the translocation of the substrate across the membrane. In Haemophilus influenzae (strain ATCC 51907 / DSM 11121 / KW20 / Rd), this protein is Arginine ABC transporter permease protein ArtQ (artQ).